A 351-amino-acid polypeptide reads, in one-letter code: MKNFILLAVSSILLVDLLPTHFEHNVDLSRAINVNGVSFNNVDTSSLGAAQVRQSASRGRGLGEKPKEGADKEKKKEKEKEKEEEPKKPNENKLKQPEQPAAGAGGEQPAAGAGGEQPAAGAGGEQPAAGARGEQPAAGAGGEQPAAGAGGEQPAAGAGGEQPAAGAGGEQPAAGAGGEQPAAGARGEQPAAGAGGEQPAAGAGGEQPAAGARGEQPAAGAGGEQPAPAPRREQPAPGAVAGDGARGGNAGAGKGQGQNNQGANVPNEKVVNDYLHKIRSSVTTEWTPCSVTCGNGVRIRRKGHAGNKKAEDLTMDDLEVEACVMDKCAGIFNVVSNSLGLVILLVLALFN.

A signal peptide spans 1 to 22 (MKNFILLAVSSILLVDLLPTHF). Positions 50 to 266 (AQVRQSASRG…GQNNQGANVP (217 aa)) are disordered. Residues 61-96 (GLGEKPKEGADKEKKKEKEKEKEEEPKKPNENKLKQ) are compositionally biased toward basic and acidic residues. The interval 80 to 88 (KEKEEEPKK) is required for the binding to heparan sulfate proteoglycans (HSPGs) on the surface of host hepatocytes. The interval 93 to 97 (KLKQP) is region I; contains the proteolytic cleavage site. Residues 97 to 219 (PEQPAAGAGG…AGARGEQPAA (123 aa)) show a composition bias toward low complexity. Tandem repeats lie at residues 101 to 109 (AAGAGGEQP), 110 to 118 (AAGAGGEQP), 119 to 127 (AAGAGGEQP), 128 to 136 (AAGARGEQP), 137 to 145 (AAGAGGEQP), 146 to 154 (AAGAGGEQP), 155 to 163 (AAGAGGEQP), 164 to 172 (AAGAGGEQP), 173 to 181 (AAGAGGEQP), 182 to 190 (AAGARGEQP), 191 to 199 (AAGAGGEQP), 200 to 208 (AAGAGGEQP), 209 to 217 (AAGARGEQP), and 218 to 226 (AAGAGGEQP). Positions 101-226 (AAGAGGEQPA…PAAGAGGEQP (126 aa)) are 14 X 9 AA tandem repeats of A-A-G-A-[GR]-G-E-Q-P. Positions 244–256 (GARGGNAGAGKGQ) are enriched in gly residues. Positions 277-329 (KIRSSVTTEWTPCSVTCGNGVRIRRKGHAGNKKAEDLTMDDLEVEACVMDKCA) constitute a TSP type-1 domain. 2 disulfide bridges follow: cysteine 289-cysteine 323 and cysteine 293-cysteine 328. Threonine 292 is a glycosylation site (O-linked (Fuc) threonine). The GPI-anchor amidated cysteine moiety is linked to residue cysteine 328. The propeptide at 329–351 (AGIFNVVSNSLGLVILLVLALFN) is removed in mature form.

It belongs to the plasmodium circumsporozoite protein family. Post-translationally, during host cell invasion, proteolytically cleaved at the cell membrane in the region I by a papain-like cysteine protease of parasite origin. Cleavage is triggered by the sporozoite contact with highly sulfated heparan sulfate proteoglycans (HSPGs) present on the host hepatocyte cell surface. Cleavage exposes the TSP type-1 (TSR) domain and is required for productive invasion of host hepatocytes but not for adhesion to the host cell membrane. Cleavage is dispensable for sporozoite development in the oocyst, motility and for traversal of host and vector cells. O-glycosylated; maybe by POFUT2.

The protein resides in the cell membrane. The protein localises to the cytoplasm. In terms of biological role, essential sporozoite protein. In the mosquito vector, required for sporozoite development in the oocyst, migration through the vector hemolymph and entry into the vector salivary glands. In the vertebrate host, required for sporozoite migration through the host dermis and infection of host hepatocytes. Binds to highly sulfated heparan sulfate proteoglycans (HSPGs) on the surface of host hepatocytes. In the vertebrate host, binds to highly sulfated heparan sulfate proteoglycans (HSPGs) on the surface of host hepatocytes and is required for sporozoite invasion of the host hepatocytes. The chain is Circumsporozoite protein from Plasmodium knowlesi (strain nuri).